The following is a 122-amino-acid chain: Photosystem II extrinsic protein U (122 aa).

Residues 1-26 (MKTIVRLFAILMVLISSVGFVGSAVA) form the signal peptide.

Belongs to the PsbU family. In terms of assembly, PSII is composed of 1 copy each of membrane proteins PsbA, PsbB, PsbC, PsbD, PsbE, PsbF, PsbH, PsbI, PsbJ, PsbK, PsbL, PsbM, PsbT, PsbX, PsbY, PsbZ, Psb30/Ycf12, peripheral proteins PsbO, CyanoQ (PsbQ), PsbU, PsbV and a large number of cofactors. It forms dimeric complexes.

The protein localises to the cellular thylakoid membrane. Functionally, one of the extrinsic, lumenal subunits of photosystem II (PSII). PSII is a light-driven water plastoquinone oxidoreductase, using light energy to abstract electrons from H(2)O, generating a proton gradient subsequently used for ATP formation. The extrinsic proteins stabilize the structure of photosystem II oxygen-evolving complex (OEC), the ion environment of oxygen evolution and protect the OEC against heat-induced inactivation. The protein is Photosystem II extrinsic protein U of Crocosphaera subtropica (strain ATCC 51142 / BH68) (Cyanothece sp. (strain ATCC 51142)).